The following is a 345-amino-acid chain: Fructose-1,6-bisphosphatase class 1 2 (345 aa).

Mg(2+)-binding residues include glutamate 90, aspartate 109, leucine 111, and aspartate 112. Substrate is bound by residues aspartate 112–serine 115 and asparagine 200. Glutamate 272 contributes to the Mg(2+) binding site.

The protein belongs to the FBPase class 1 family. In terms of assembly, homotetramer. Mg(2+) is required as a cofactor.

The protein localises to the cytoplasm. It catalyses the reaction beta-D-fructose 1,6-bisphosphate + H2O = beta-D-fructose 6-phosphate + phosphate. Its pathway is carbohydrate biosynthesis; gluconeogenesis. This chain is Fructose-1,6-bisphosphatase class 1 2, found in Nitrobacter hamburgensis (strain DSM 10229 / NCIMB 13809 / X14).